The chain runs to 721 residues: Fatty acid oxidation complex subunit alpha (721 aa).

Positions 1–190 are enoyl-CoA hydratase/isomerase; it reads MIYEGKAITV…KVGAVDAVVA (190 aa). Asp-297 contacts substrate. The segment at 312-721 is 3-hydroxyacyl-CoA dehydrogenase; the sequence is KDVKQAAVLG…SFFGQASSEE (410 aa). Residues Met-325, Asp-344, 401 to 403, Lys-408, and Ser-430 each bind NAD(+); that span reads VVE. The For 3-hydroxyacyl-CoA dehydrogenase activity role is filled by His-451. An NAD(+)-binding site is contributed by Asn-454. Substrate contacts are provided by Asn-501 and Tyr-660.

In the N-terminal section; belongs to the enoyl-CoA hydratase/isomerase family. The protein in the C-terminal section; belongs to the 3-hydroxyacyl-CoA dehydrogenase family. As to quaternary structure, heterotetramer of two alpha chains (FadB) and two beta chains (FadA).

It carries out the reaction a (3S)-3-hydroxyacyl-CoA + NAD(+) = a 3-oxoacyl-CoA + NADH + H(+). The enzyme catalyses a (3S)-3-hydroxyacyl-CoA = a (2E)-enoyl-CoA + H2O. It catalyses the reaction a 4-saturated-(3S)-3-hydroxyacyl-CoA = a (3E)-enoyl-CoA + H2O. The catalysed reaction is (3S)-3-hydroxybutanoyl-CoA = (3R)-3-hydroxybutanoyl-CoA. It carries out the reaction a (3Z)-enoyl-CoA = a 4-saturated (2E)-enoyl-CoA. The enzyme catalyses a (3E)-enoyl-CoA = a 4-saturated (2E)-enoyl-CoA. It functions in the pathway lipid metabolism; fatty acid beta-oxidation. Functionally, involved in the aerobic and anaerobic degradation of long-chain fatty acids via beta-oxidation cycle. Catalyzes the formation of 3-oxoacyl-CoA from enoyl-CoA via L-3-hydroxyacyl-CoA. It can also use D-3-hydroxyacyl-CoA and cis-3-enoyl-CoA as substrate. In Pseudomonas syringae pv. syringae (strain B728a), this protein is Fatty acid oxidation complex subunit alpha.